The following is a 145-amino-acid chain: 3-dehydroquinate dehydratase (145 aa).

Y22 serves as the catalytic Proton acceptor. The substrate site is built by N71, H77, and D84. H97 (proton donor) is an active-site residue. Residues 98–99 (LS) and R108 each bind substrate.

It belongs to the type-II 3-dehydroquinase family. In terms of assembly, homododecamer.

It catalyses the reaction 3-dehydroquinate = 3-dehydroshikimate + H2O. The protein operates within metabolic intermediate biosynthesis; chorismate biosynthesis; chorismate from D-erythrose 4-phosphate and phosphoenolpyruvate: step 3/7. In terms of biological role, catalyzes a trans-dehydration via an enolate intermediate. This is 3-dehydroquinate dehydratase from Francisella tularensis subsp. mediasiatica (strain FSC147).